The primary structure comprises 64 residues: Protein translocase subunit SecE (64 aa).

Residues 35-55 (LVVLGTVAFITVFFAVVDYGI) form a helical membrane-spanning segment.

This sequence belongs to the SecE/SEC61-gamma family. As to quaternary structure, component of the Sec protein translocase complex. Heterotrimer consisting of SecY, SecE and SecG subunits. The heterotrimers can form oligomers, although 1 heterotrimer is thought to be able to translocate proteins. Interacts with the ribosome. Interacts with SecDF, and other proteins may be involved. Interacts with SecA.

It is found in the cell membrane. In terms of biological role, essential subunit of the Sec protein translocation channel SecYEG. Clamps together the 2 halves of SecY. May contact the channel plug during translocation. This is Protein translocase subunit SecE from Halalkalibacterium halodurans (strain ATCC BAA-125 / DSM 18197 / FERM 7344 / JCM 9153 / C-125) (Bacillus halodurans).